The sequence spans 824 residues: Leucine--tRNA ligase (824 aa).

The 'HIGH' region motif lies at 42–52 (PYPSGRIHMGH). The short motif at 581–585 (KMSKS) is the 'KMSKS' region element. K584 contacts ATP.

It belongs to the class-I aminoacyl-tRNA synthetase family.

It is found in the cytoplasm. The catalysed reaction is tRNA(Leu) + L-leucine + ATP = L-leucyl-tRNA(Leu) + AMP + diphosphate. This chain is Leucine--tRNA ligase, found in Geobacter sulfurreducens (strain ATCC 51573 / DSM 12127 / PCA).